The following is a 169-amino-acid chain: MQIETLTVEPLTKEAFAPFGDVIEVEGAQLRLINNGTTERYHDLARVEAAGTQTRALINIFRGQSFAAPIDIMMMERHPFGSQAFIPLNGRPFLVVVAEDAGAGPARPRAFLARGDQGVNYLRNIWHHPLLALEQKSDFLVVDRAGREDNLEEYFFSDYAYRIETTQTA.

Belongs to the ureidoglycolate lyase family. Homodimer. Requires Ni(2+) as cofactor.

The enzyme catalyses (S)-ureidoglycolate = urea + glyoxylate. It functions in the pathway nitrogen metabolism; (S)-allantoin degradation. Functionally, catalyzes the catabolism of the allantoin degradation intermediate (S)-ureidoglycolate, generating urea and glyoxylate. Involved in the utilization of allantoin as nitrogen source. The polypeptide is Ureidoglycolate lyase (Brucella melitensis biotype 2 (strain ATCC 23457)).